The chain runs to 836 residues: Protein O-mannosyl-transferase TMTC2 (836 aa).

Residues 1–21 (MIAELVSSALGLALYLNTLSA) traverse the membrane as a helical segment. Over 22 to 84 (DFCYDDSRAI…LNHAIGGLNP (63 aa)) the chain is Extracellular. The chain crosses the membrane as a helical span at residues 85–105 (WSYHLVNVLLHAAVTGLFTSF). Residues 106 to 107 (SK) are Cytoplasmic-facing. The chain crosses the membrane as a helical span at residues 108–128 (ILLGDGYWTFMAGLMFASHPI). Residues 129 to 132 (HTEA) are Extracellular-facing. A helical membrane pass occupies residues 133–153 (VAGIVGRADVGASLFFLLSLL). Residues 154–162 (CYIKHCSTR) lie on the Cytoplasmic side of the membrane. 2 helical membrane-spanning segments follow: residues 163-184 (GYSARTWGWFLGSGLCAGCSML) and 185-204 (WKEQGVTVLAVSAVYDVFVF). Over 205–220 (HRLKIKQILPTIYKRK) the chain is Cytoplasmic. A helical membrane pass occupies residues 221 to 241 (NLSLFLSISLLIFWGSSLLGA). Residues 242–312 (RLYWMGNKPP…KTVCDWRNLH (71 aa)) lie on the Extracellular side of the membrane. Residues 313–333 (TVAFYTGLLLLAYYGLKSPSV) form a helical membrane-spanning segment. Residues 334–399 (DRECNGKTVT…TENIVVLSLS (66 aa)) lie on the Cytoplasmic side of the membrane. The chain crosses the membrane as a helical span at residues 400–420 (LLIIPFVPATNLFFYVGFVIA). The Extracellular portion of the chain corresponds to 421-422 (ER). The helical transmembrane segment at 423 to 443 (VLYIPSMGFCLLITVGARALY) threads the bilayer. Over 444 to 449 (VKVQKR) the chain is Cytoplasmic. Residues 450-470 (FLKSLIFYATATLIVFYGLKT) traverse the membrane as a helical segment. The Extracellular segment spans residues 471-836 (AIRNGDWQNE…EKQGLKTSKT (366 aa)). 9 TPR repeats span residues 493–526 (AKAWGNLGNVLKSQSKISEAESAYRNALYYRSNM), 527–560 (ADMLYNLGLLLQENSRFAEALHYYKLAIGSRPTL), 561–594 (ASAYLNTGIILMNQGRTEEARRTFLKCSEIPDEN), 606–639 (TSCLYNLGKLYHEQGHYEEALSVYKEAIQKMPRQ), 643–676 (QSLYNMMGEAYMRLSKLPEAEHWYMESLRSKTDH), 677–710 (IPAHLTYGKLLALTGRKSEAEKLFLKAIELDPTK), 711–744 (GNCYMHYGQFLLEEARLIEAAEMAKKAAELDSTE), 745–778 (FDVVFNAAHMLRQASLNEAAEKYYDLAARLRPNY), and 779–812 (PAALMNLGAILHLNGRLQKAEANYLRALQLKPDD).

Belongs to the TMTC family.

The protein resides in the membrane. It is found in the endoplasmic reticulum. The catalysed reaction is a di-trans,poly-cis-dolichyl beta-D-mannosyl phosphate + L-seryl-[protein] = 3-O-(alpha-D-mannosyl)-L-seryl-[protein] + a di-trans,poly-cis-dolichyl phosphate + H(+). It carries out the reaction a di-trans,poly-cis-dolichyl beta-D-mannosyl phosphate + L-threonyl-[protein] = 3-O-(alpha-D-mannosyl)-L-threonyl-[protein] + a di-trans,poly-cis-dolichyl phosphate + H(+). The protein operates within protein modification; protein glycosylation. Its function is as follows. Transfers mannosyl residues to the hydroxyl group of serine or threonine residues. The 4 members of the TMTC family are O-mannosyl-transferases dedicated primarily to the cadherin superfamily, each member seems to have a distinct role in decorating the cadherin domains with O-linked mannose glycans at specific regions. Also acts as O-mannosyl-transferase on other proteins such as PDIA3. This Homo sapiens (Human) protein is Protein O-mannosyl-transferase TMTC2.